Consider the following 78-residue polypeptide: Small ribosomal subunit protein bS20 (78 aa).

It belongs to the bacterial ribosomal protein bS20 family.

Its function is as follows. Binds directly to 16S ribosomal RNA. The sequence is that of Small ribosomal subunit protein bS20 from Streptococcus thermophilus (strain ATCC BAA-491 / LMD-9).